The following is a 1021-amino-acid chain: Disease resistance protein Pikm2-TS (1021 aa).

The tract at residues 1–182 (MELVVGASEA…PQIIGIKEPV (182 aa)) is structured coiled coil (CC) domain. An NB-ARC domain is found at 186-519 (TVMEELEVWL…WIAEGFANEK (334 aa)). The disordered stretch occupies residues 297-317 (PENDGNPDNTPIRLQETTDDD). LRR repeat units lie at residues 612–634 (LAQV…SFNY), 659–682 (MLLL…IQKL), and 683–705 (EYLE…IVQL). The tract at residues 719–751 (RKGLRLPQEKSKKPIKNPSPQGKTKEPAKKGFL) is disordered. 6 LRR repeats span residues 785 to 807 (LTGL…TFKQ), 817 to 841 (SCGL…DMPA), 843 to 865 (PRYL…ITSI), 866 to 888 (TTLN…ILHI), 912 to 935 (KDIL…GFKS), and 957 to 981 (MPAL…ILEN).

This sequence belongs to the disease resistance NB-LRR family. As to expression, constitutively expressed.

In terms of biological role, disease resistance (R) protein. Resistance proteins guard the plant against pathogens that contain an appropriate avirulence protein via an indirect interaction with this avirulence protein. That triggers a defense system including the hypersensitive response, which restricts the pathogen growth. Contribution of Pikm-1 is required to recognize the effector avirulence protein AVR-Pik. This chain is Disease resistance protein Pikm2-TS, found in Oryza sativa subsp. japonica (Rice).